Consider the following 823-residue polypeptide: MSNIQNMSLEDIMGERFGRYSKYIIQDRALPDIRDGLKPVQRRILYSMNKDSNTFDKSYRKSAKSVGNIMGNFHPHGDSSIYDAMVRMSQNWKNREILVEMHGNNGSMDGDPPAAMRYTEARLSEIAGYLLQDIEKKTVPFAWNFDDTEKEPTVLPAAFPNLLVNGSTGISAGYATDIPPHNLAEVIDAAVYMIDHPTAKIDKLMEFLPGPDFPTGAIIQGRDEIKKAYETGKGRVVVRSKTEIEKLKGGKEQIVIIEIPYEINKANLVKKIDDVRVNNKVAGIAEVRDESDRDGLRIAIELKKDANTELVLNYLFKYTDLQINYNFNMVAIDNFTPRQVGIVPILSSYIAHRREVILARSRFDKEKAEKRLHIVEGLIRVISILDEVIALIRASENKADAKENLKVSYDFTEEQAEAIVTLQLYRLTNTDVVVLQEEEAELREKIAMLAAIIGDERTMYNLMKKELREVKKKFATPRLSSLEDTAKAIEIDTASLIAEEDTYVSVTKAGYIKRTSPRSFAASTLEEIGKRDDDRLIFVQSAKTTQHLLMFTSLGNVIYRPIHELADIRWKDIGEHLSQTITNFETNEEILYVEVLDQFDDATTYFAVTRLGQIKRVERKEFTPWRTYRSKSVKYAKLKDDTDQIVAVAPIKLDDVVLVSQNGYALRFNIEEVPVVGAKAAGVKAMNLKEDDVLQSGFICNTSSFYLLTQRGSLKRVSIEEILATSRAKRGLQVLRELKNKPHRVFLAGAVAEQGFVGDFFSTEVDVNDQTLLVQSNKGTIYESRLQDLNLSERTSNGSFISDTISDEEVFDAYLQEVVTEDK.

One can recognise a Topo IIA-type catalytic domain in the interval 30–496 (LPDIRDGLKP…KAIEIDTASL (467 aa)). The active-site O-(5'-phospho-DNA)-tyrosine intermediate is Tyr118.

It belongs to the type II topoisomerase GyrA/ParC subunit family. ParC type 2 subfamily. As to quaternary structure, heterotetramer composed of ParC and ParE.

The protein resides in the cell membrane. It catalyses the reaction ATP-dependent breakage, passage and rejoining of double-stranded DNA.. With respect to regulation, inhibited by quinolones, such as levofloxacin. Its function is as follows. Topoisomerase IV is essential for chromosome segregation. It relaxes supercoiled DNA. Performs the decatenation events required during the replication of a circular DNA molecule. The chain is DNA topoisomerase 4 subunit A from Streptococcus pneumoniae serotype 4 (strain ATCC BAA-334 / TIGR4).